The sequence spans 845 residues: Envelope glycoprotein B (845 aa).

The signal sequence occupies residues 1–41; the sequence is MSFTDQTYTRSCMHTCITRDHRLYGIVIISLLLLLDNSVFC. Topologically, residues 42–727 are virion surface; the sequence is QNENKVIDIK…SGVASFLQNP (686 aa). Disulfide bonds link Cys-62–Cys-523, Cys-80–Cys-479, Cys-153–Cys-218, Cys-310–Cys-358, and Cys-552–Cys-591. The involved in fusion and/or binding to host membrane stretch occupies residues 120 to 126; it reads RYADVFS. An N-linked (GlcNAc...) asparagine; by host glycan is attached at Asn-175. Positions 204 to 212 are involved in fusion and/or binding to host membrane; it reads LPGTWLRKT. Residues Asn-328, Asn-388, Asn-414, Asn-420, Asn-425, Asn-564, and Asn-632 are each glycosylated (N-linked (GlcNAc...) asparagine; by host). The interval 677 to 725 is hydrophobic membrane proximal region; sequence LEQAIVTKPYVPPAGMQQALQGLSGVGSVITGTLGAMQSLVSGVASFLQ. A helical membrane pass occupies residues 728–748; the sequence is FGGTLSIILIGCIIVGVIIIY. Over 749–845 the chain is Intravirion; it reads NRMNQSRGSP…GYTTLSSMNI (97 aa). Residues 837-840 carry the Internalization motif motif; the sequence is YTTL.

Belongs to the herpesviridae glycoprotein B family. In terms of assembly, homotrimer; disulfide-linked. Binds to heparan sulfate proteoglycans. Interacts with gH/gL heterodimer. Post-translationally, a proteolytic cleavage by host furin generates two subunits that remain linked by disulfide bonds.

The protein localises to the virion membrane. It localises to the host cell membrane. The protein resides in the host endosome membrane. Its subcellular location is the host Golgi apparatus membrane. Functionally, envelope glycoprotein that forms spikes at the surface of virion envelope. Essential for the initial attachment to heparan sulfate moieties of the host cell surface proteoglycans. Involved in fusion of viral and cellular membranes leading to virus entry into the host cell. Following initial binding to its host receptors, membrane fusion is mediated by the fusion machinery composed at least of gB and the heterodimer gH/gL. May be involved in the fusion between the virion envelope and the outer nuclear membrane during virion egress. The polypeptide is Envelope glycoprotein B (Elephas maximus (Indian elephant)).